A 64-amino-acid chain; its full sequence is Large ribosomal subunit protein bL28 (64 aa).

This sequence belongs to the bacterial ribosomal protein bL28 family.

The sequence is that of Large ribosomal subunit protein bL28 from Campylobacter jejuni subsp. jejuni serotype O:6 (strain 81116 / NCTC 11828).